The primary structure comprises 257 residues: Meiotically up-regulated gene 14 protein (257 aa).

The protein resides in the cytoplasm. The protein localises to the nucleus. Functionally, has a role in meiosis. The protein is Meiotically up-regulated gene 14 protein (mug14) of Schizosaccharomyces pombe (strain 972 / ATCC 24843) (Fission yeast).